The following is a 294-amino-acid chain: Acetyl-coenzyme A carboxylase carboxyl transferase subunit beta (294 aa).

One can recognise a CoA carboxyltransferase N-terminal domain in the interval 25-294 (VWTKCTSCEQ…PLVVPVDGSH (270 aa)). The Zn(2+) site is built by Cys29, Cys32, Cys48, and Cys51. A C4-type zinc finger spans residues 29–51 (CTSCEQVLYSAELERNLEVCPKC).

This sequence belongs to the AccD/PCCB family. In terms of assembly, acetyl-CoA carboxylase is a heterohexamer composed of biotin carboxyl carrier protein (AccB), biotin carboxylase (AccC) and two subunits each of ACCase subunit alpha (AccA) and ACCase subunit beta (AccD). The cofactor is Zn(2+).

It localises to the cytoplasm. It carries out the reaction N(6)-carboxybiotinyl-L-lysyl-[protein] + acetyl-CoA = N(6)-biotinyl-L-lysyl-[protein] + malonyl-CoA. Its pathway is lipid metabolism; malonyl-CoA biosynthesis; malonyl-CoA from acetyl-CoA: step 1/1. Component of the acetyl coenzyme A carboxylase (ACC) complex. Biotin carboxylase (BC) catalyzes the carboxylation of biotin on its carrier protein (BCCP) and then the CO(2) group is transferred by the transcarboxylase to acetyl-CoA to form malonyl-CoA. This is Acetyl-coenzyme A carboxylase carboxyl transferase subunit beta from Aliivibrio fischeri (strain MJ11) (Vibrio fischeri).